Here is a 160-residue protein sequence, read N- to C-terminus: MPHSYGIRARTRYTFQRGFREHGQIRLSTYLKTYKVGDIVDIKVNGAVQKGMPHKYYHGKTGVVYNVTQSSVGVLIYKVVGNRYMEKRVNVRIEHVKHSKCRQDFLDRVKANEAKRKEAKAQGKTVQLRRQPAPPATAHFVSTENNEPVTLHPVAYDTTI.

The segment at 114–140 is disordered; sequence AKRKEAKAQGKTVQLRRQPAPPATAHF.

The protein belongs to the eukaryotic ribosomal protein eL21 family. Component of the large ribosomal subunit (LSU). Mature yeast ribosomes consist of a small (40S) and a large (60S) subunit. The 40S small subunit contains 1 molecule of ribosomal RNA (18S rRNA) and at least 33 different proteins. The large 60S subunit contains 3 rRNA molecules (25S, 5.8S and 5S rRNA) and at least 46 different proteins.

It is found in the cytoplasm. Its function is as follows. Component of the ribosome, a large ribonucleoprotein complex responsible for the synthesis of proteins in the cell. The small ribosomal subunit (SSU) binds messenger RNAs (mRNAs) and translates the encoded message by selecting cognate aminoacyl-transfer RNA (tRNA) molecules. The large subunit (LSU) contains the ribosomal catalytic site termed the peptidyl transferase center (PTC), which catalyzes the formation of peptide bonds, thereby polymerizing the amino acids delivered by tRNAs into a polypeptide chain. The nascent polypeptides leave the ribosome through a tunnel in the LSU and interact with protein factors that function in enzymatic processing, targeting, and the membrane insertion of nascent chains at the exit of the ribosomal tunnel. The sequence is that of Large ribosomal subunit protein eL21B (rpl2102) from Schizosaccharomyces pombe (strain 972 / ATCC 24843) (Fission yeast).